A 202-amino-acid chain; its full sequence is Nucleoside triphosphate pyrophosphatase (202 aa).

Residue Asp79 is the Proton acceptor of the active site.

Belongs to the Maf family. A divalent metal cation serves as cofactor.

The protein resides in the cytoplasm. The catalysed reaction is a ribonucleoside 5'-triphosphate + H2O = a ribonucleoside 5'-phosphate + diphosphate + H(+). It carries out the reaction a 2'-deoxyribonucleoside 5'-triphosphate + H2O = a 2'-deoxyribonucleoside 5'-phosphate + diphosphate + H(+). Its function is as follows. Nucleoside triphosphate pyrophosphatase. May have a dual role in cell division arrest and in preventing the incorporation of modified nucleotides into cellular nucleic acids. This is Nucleoside triphosphate pyrophosphatase from Rhodopseudomonas palustris (strain BisB18).